The sequence spans 343 residues: Mesaconyl-CoA hydratase (343 aa).

The region spanning 47-116 (SDEFARACGL…STVIGLKENS (70 aa)) is the MaoC-like domain. Residues 60–63 (PVDE), 83–86 (VANL), and 94–96 (LKP) contribute to the substrate site.

The catalysed reaction is (2R,3S)-beta-methylmalyl-CoA = 2-methylfumaryl-CoA + H2O. Involved in the ethylmalonyl-CoA pathway for acetate assimilation. Catalyzes the reversible hydration of mesaconyl-CoA (2-methylfumaryl-CoA) to yield beta-methylmalyl-CoA ((2R,3S)-beta-methylmalyl-CoA). This Cereibacter sphaeroides (strain ATCC 17023 / DSM 158 / JCM 6121 / CCUG 31486 / LMG 2827 / NBRC 12203 / NCIMB 8253 / ATH 2.4.1.) (Rhodobacter sphaeroides) protein is Mesaconyl-CoA hydratase (mch).